A 563-amino-acid chain; its full sequence is MLEEAGEVLENVLKASCLPLGFIVFLPAVLLLVAPPLPAADAAHEFTVYRMQQYDLQGQPYGTRNAVLNTEARTVDADVLSRRCVLMRLLDFSYEHYQKALRQSAGAVVIILPRAMAAVPQDVVRQFMEIEPEMLAMETVVPVYFAVEDEALLSIYEQTQAASASQGSASAAEVLLHTATANGFQMVTSGAQSQAVSDWLITSVEGRLTGLGGEDLPTIVIVAHYDAFGVAPWLSLGADSNGSGISVLLELARLFSRLYTYKRTHAAYNLLFFASGGGKFNYQGTKRWLEDSLDHTDSSLLQDNVAFVLCLDTVGRGSHLRLHVSKPPREGTLQHAFLRELETVAAHQFPDVSFSMVHKKINLADDVLAWEHERFAIRRLPAFTLSHLESHRAGPRSSIMDVRSRVDSKTLTRNTRIIAEALTRVIYNLTEKGTPPDMPVFTEQMQVQEEQIDSVMDWLTNQPRAAQLLDKDGTFLSTLEHFLSRYLKDVRQHHVKADKRDPEFVFYDQLKQVMNAYRVKPAIFDLLLALCIGAYLGMAYTAVQHFHVLYKTVQRLLLKAKAQ.

An N-terminal signal peptide occupies residues 1–42 (MLEEAGEVLENVLKASCLPLGFIVFLPAVLLLVAPPLPAADA). Topologically, residues 43–522 (AHEFTVYRMQ…VMNAYRVKPA (480 aa)) are lumenal. Residues asparagine 241 and asparagine 428 are each glycosylated (N-linked (GlcNAc...) asparagine). A helical membrane pass occupies residues 523–543 (IFDLLLALCIGAYLGMAYTAV). Over 544 to 563 (QHFHVLYKTVQRLLLKAKAQ) the chain is Cytoplasmic.

The protein belongs to the nicastrin family. In terms of assembly, component of the back of Sec61 (BOS) complex, composed of NCLN/Nicalin, NOMO1 and TMEM147. The BOS complex is part of the multi-pass translocon (MPT) complex, composed of three subcomplexes, the GEL complex (composed of RAB5IF/OPTI and TMCO1), the BOS complex (composed of NCLN/Nicalin, NOMO1 and TMEM147) and the PAT complex (composed of WDR83OS/Asterix and CCDC47). The MPT complex associates with the SEC61 complex.

The protein localises to the endoplasmic reticulum membrane. Component of the multi-pass translocon (MPT) complex that mediates insertion of multi-pass membrane proteins into the lipid bilayer of membranes. The MPT complex takes over after the SEC61 complex: following membrane insertion of the first few transmembrane segments of proteins by the SEC61 complex, the MPT complex occludes the lateral gate of the SEC61 complex to promote insertion of subsequent transmembrane regions. May antagonize Nodal signaling and subsequent organization of axial structures during mesodermal patterning, via its interaction with NOMO. In Mus musculus (Mouse), this protein is BOS complex subunit NCLN (Ncln).